The following is a 191-amino-acid chain: Dephospho-CoA kinase (191 aa).

The 189-residue stretch at 3 to 191 (AIGITGSYAS…KLIKNLECQV (189 aa)) folds into the DPCK domain. Residue 11–16 (ASGKTF) participates in ATP binding.

The protein belongs to the CoaE family.

It is found in the cytoplasm. It carries out the reaction 3'-dephospho-CoA + ATP = ADP + CoA + H(+). It participates in cofactor biosynthesis; coenzyme A biosynthesis; CoA from (R)-pantothenate: step 5/5. Catalyzes the phosphorylation of the 3'-hydroxyl group of dephosphocoenzyme A to form coenzyme A. The polypeptide is Dephospho-CoA kinase (Rickettsia typhi (strain ATCC VR-144 / Wilmington)).